The sequence spans 742 residues: MKRASLGGHAPVSLPSLNDDALEKKRAKENSRKQRELRRSSALHSITPRRESLNNSSPFNSSHQVPVLSNFEEWIKLATDNKINSTNTWNFALIDYFHDMSLLRDGEDINFQKASCTLDGCVKIYTSRIDSVATETGKLLSGLANDSKVLQQTEEGEDAENDDEDLQKKKERKRAQRSVKTLVKDFESIRAKKFELECSFDPLFKKMCADFDEDGAKGLLMNHLCVDQHGRIVFDSSDTVIKDLENKDVEAESQEAVVAAPIESHDTEMTNVHDNISRETLNGIYKCYFTDIDQLTICPSLQGFEFDSKGNLDVSLLKSLSDEVNMITTTSLVDNTMEKTDADAASLSSDSDGEEGHIVHALEEMAYDEENPYVDVVPKAMDESENPDFGVDTEVNMADGSTMNENYSIISTAAANGVYEYFDKSMKKNWAGPEHWRIQALRKNINNASTVFNSSNTAESSDNVSRSLSSTERKKRRELDNAIDFLQEVDVEALFTPATSSLKLPKSHWKRHNRCLLPDDYQYDSKRLLQLFLKPKMSVLPNADGEGQLQLNKALDDENDLDGIQPHGFDSDGSDNVDEGIPPYGFGDSDSPKQTPLLTPPSSSGFGDNLLLTARLAKPDMLNYAKRAKKVDVRVLKEKLWKCLDLENTIKENSINSHIEGSEMESEETNMPVKSFFSTVNQLEETYEKKELKDISTSFAFICVLHLANEHNLELTSNEDFSDVFIRPGPNLTTLEALENDV.

4 disordered regions span residues 1–62, 151–172, 452–473, and 564–604; these read MKRA…FNSS, QQTE…KKER, FNSS…STER, and IQPH…PSSS. Over residues 21–39 the composition is skewed to basic and acidic residues; it reads ALEKKRAKENSRKQRELRR. Residues 53 to 62 are compositionally biased toward polar residues; sequence LNNSSPFNSS. Over residues 154–165 the composition is skewed to acidic residues; the sequence is EEGEDAENDDED. Composition is skewed to polar residues over residues 452 to 470 and 592 to 604; these read FNSS…SLSS and PKQT…PSSS.

This sequence belongs to the CND2 (condensin subunit 2) family. As to quaternary structure, component of the condensin complex, which contains the cut14/smc2 and cut3/smc2 heterodimer, and three non SMC subunits that probably regulate the complex: cnd1, cnd2 and cnd3.

The protein localises to the nucleus. It localises to the cytoplasm. The protein resides in the chromosome. Functionally, regulatory subunit of the condensin complex, a complex required for conversion of interphase chromatin into mitotic-like condense chromosomes. The condensin complex probably introduces positive supercoils into relaxed DNA in the presence of type I topoisomerases and converts nicked DNA into positive knotted forms in the presence of type II topoisomerases. The condensin complex probably also plays a role during interphase in processes such as DNA repair. The polypeptide is Condensin complex subunit 2 (cnd2) (Schizosaccharomyces pombe (strain 972 / ATCC 24843) (Fission yeast)).